The sequence spans 103 residues: Large ribosomal subunit protein bL21 (103 aa).

Belongs to the bacterial ribosomal protein bL21 family. As to quaternary structure, part of the 50S ribosomal subunit. Contacts protein L20.

Functionally, this protein binds to 23S rRNA in the presence of protein L20. The chain is Large ribosomal subunit protein bL21 from Cupriavidus pinatubonensis (strain JMP 134 / LMG 1197) (Cupriavidus necator (strain JMP 134)).